Here is a 452-residue protein sequence, read N- to C-terminus: tRNA modification GTPase MnmE (452 aa).

Positions 22, 80, and 119 each coordinate (6S)-5-formyl-5,6,7,8-tetrahydrofolate. Residues Gly213–Phe375 enclose the TrmE-type G domain. Residue Asn223 participates in K(+) binding. GTP contacts are provided by residues Asn223 to Thr228, Thr242 to Thr248, and Asp267 to Gly270. Ser227 is a binding site for Mg(2+). The K(+) site is built by Thr242, Ile244, and Thr247. Thr248 is a binding site for Mg(2+). Lys452 contacts (6S)-5-formyl-5,6,7,8-tetrahydrofolate.

The protein belongs to the TRAFAC class TrmE-Era-EngA-EngB-Septin-like GTPase superfamily. TrmE GTPase family. As to quaternary structure, homodimer. Heterotetramer of two MnmE and two MnmG subunits. K(+) serves as cofactor.

Its subcellular location is the cytoplasm. In terms of biological role, exhibits a very high intrinsic GTPase hydrolysis rate. Involved in the addition of a carboxymethylaminomethyl (cmnm) group at the wobble position (U34) of certain tRNAs, forming tRNA-cmnm(5)s(2)U34. The chain is tRNA modification GTPase MnmE from Petrotoga mobilis (strain DSM 10674 / SJ95).